Reading from the N-terminus, the 456-residue chain is MPYIPHTPNDTKEMLEAIGAQDIQDLFDEIPASLQYAGFQNIPAGINEMEMLKEAQNQAQKNRNGICFIGAGCYEHHIPAAVWDIASRGEFLTAYTPYQAEASQGTLQLLYEYQTMICELTGMEVSNASMYDGATALAEAVLMAVRLNKHSKTNRVLIAGTVHPFYRETIETIVRNQHIEVITLPFDEQQGITDLGSLNQYTGEDITALVIAQPNFFGCLEQVDKMTSWAHHNKTISVACVNPTSLALLKPPGSWGEHGVDIVCGEGQPLGSPMASGGPYFGFLSTRMAHVRQMPGRIIGRTVDKDGKTGFSLTLQAREQHIRRAKATSNICTNQGLLVTAATIYMSLLGPEGLSQVATQCHQNTHELITALTQIEGVELAFKAPFFHEALIKLNQPVQYVLQQLADAGIAGGYAPEQHYPQLANTLLVCATEVRTAEDIAKYAKTLKTIMSKRGA.

Belongs to the GcvP family. N-terminal subunit subfamily. As to quaternary structure, the glycine cleavage system is composed of four proteins: P, T, L and H. In this organism, the P 'protein' is a heterodimer of two subunits.

The catalysed reaction is N(6)-[(R)-lipoyl]-L-lysyl-[glycine-cleavage complex H protein] + glycine + H(+) = N(6)-[(R)-S(8)-aminomethyldihydrolipoyl]-L-lysyl-[glycine-cleavage complex H protein] + CO2. The glycine cleavage system catalyzes the degradation of glycine. The P protein binds the alpha-amino group of glycine through its pyridoxal phosphate cofactor; CO(2) is released and the remaining methylamine moiety is then transferred to the lipoamide cofactor of the H protein. This chain is Probable glycine dehydrogenase (decarboxylating) subunit 1, found in Legionella pneumophila (strain Corby).